We begin with the raw amino-acid sequence, 319 residues long: MTILAWCIAWVLDFIIGDPQHWPHPVRWIGRLITFVQHIVRRYCHSDKALRIGGGVMWIVVVGATWGMAWGVLALAQRIHPWLGWSVEVWMIFTVLAGRSLARAAQDVERPLRENDLAESRIKLSWIVGRDTSQLQPEQINRAVVETVAENTVDGIIAPLFFLFLGGAPLAMAYKAVNTLDSMVGYKHEKYRAIGMVSARMDDVANYLPARLSWLLLGIAAGLCRLSGWRALRIGWRDRYNHSSPNCAWSEACVAGALGIQLGGPNNYFGERVDKPWIGDAQRDISVDDISRTIRLMWGASTLALALFIAARCWLSGVA.

The next 5 membrane-spanning stretches (helical) occupy residues 56-76 (VMWIVVVGATWGMAWGVLALA), 82-102 (WLGWSVEVWMIFTVLAGRSLA), 153-173 (VDGIIAPLFFLFLGGAPLAMA), 204-224 (VANYLPARLSWLLLGIAAGLC), and 296-316 (LMWGASTLALALFIAARCWLS).

Belongs to the CobD/CbiB family.

It localises to the cell membrane. The protein operates within cofactor biosynthesis; adenosylcobalamin biosynthesis. In terms of biological role, converts cobyric acid to cobinamide by the addition of aminopropanol on the F carboxylic group. However, the true cosubstrate could be (R)-1-amino-2-propanol O-2-phosphate, leading to cobinamide phosphate. This Salmonella arizonae (strain ATCC BAA-731 / CDC346-86 / RSK2980) protein is Cobalamin biosynthesis protein CbiB.